The primary structure comprises 216 residues: Thymidylate kinase (216 aa).

10–17 (GIDGCGKT) contributes to the ATP binding site.

The protein belongs to the thymidylate kinase family.

The enzyme catalyses dTMP + ATP = dTDP + ADP. Phosphorylation of dTMP to form dTDP in both de novo and salvage pathways of dTTP synthesis. The protein is Thymidylate kinase of Prochlorococcus marinus (strain MIT 9303).